The following is a 55-amino-acid chain: MSFNKTTLFLLFKKIKINITPTTLFIIFFTYSYYYCGFLQSFNYIIYKIYLNKNK.

A helical membrane pass occupies residues 24-46 (LFIIFFTYSYYYCGFLQSFNYII).

It localises to the membrane. This is an uncharacterized protein from Dictyostelium discoideum (Social amoeba).